Consider the following 481-residue polypeptide: Probable myosin light chain kinase DDB_G0284661 (481 aa).

One can recognise a Protein kinase domain in the interval 13–269; it reads YNITDIIGEG…VKQSLAHKWI (257 aa). Residues 19-27 and lysine 43 contribute to the ATP site; that span reads IGEGTFSTV. Catalysis depends on aspartate 136, which acts as the Proton acceptor. Disordered stretches follow at residues 285 to 315 and 345 to 427; these read PLIT…PSLK and SNSH…DDDE. The segment covering 379–421 has biased composition (low complexity); it reads SNNNINNNNDNNDNNNSNSNNSNNNINNFINNNNNNNNNNSNF.

Belongs to the protein kinase superfamily. CAMK Ser/Thr protein kinase family. CaMK subfamily.

The catalysed reaction is L-seryl-[myosin light chain] + ATP = O-phospho-L-seryl-[myosin light chain] + ADP + H(+). It carries out the reaction L-threonyl-[myosin light chain] + ATP = O-phospho-L-threonyl-[myosin light chain] + ADP + H(+). Does not have a calmodulin-binding domain. Its function is as follows. May phosphorylate a specific serine in the N-terminus of a myosin light chain. In Dictyostelium discoideum (Social amoeba), this protein is Probable myosin light chain kinase DDB_G0284661.